The sequence spans 121 residues: Small ribosomal subunit protein uS13 (121 aa).

Positions 91–121 (HRMSLPVRGQRTRTNARTRRGSRKTVAGRKK) are disordered. Over residues 100 to 121 (QRTRTNARTRRGSRKTVAGRKK) the composition is skewed to basic residues.

This sequence belongs to the universal ribosomal protein uS13 family. As to quaternary structure, part of the 30S ribosomal subunit. Forms a loose heterodimer with protein S19. Forms two bridges to the 50S subunit in the 70S ribosome.

Its function is as follows. Located at the top of the head of the 30S subunit, it contacts several helices of the 16S rRNA. In the 70S ribosome it contacts the 23S rRNA (bridge B1a) and protein L5 of the 50S subunit (bridge B1b), connecting the 2 subunits; these bridges are implicated in subunit movement. Contacts the tRNAs in the A and P-sites. This is Small ribosomal subunit protein uS13 from Prochlorococcus marinus (strain MIT 9312).